A 206-amino-acid chain; its full sequence is Ribosomal RNA small subunit methyltransferase G (206 aa).

S-adenosyl-L-methionine-binding positions include glycine 74, leucine 79, 125–126 (VE), and arginine 140.

Belongs to the methyltransferase superfamily. RNA methyltransferase RsmG family.

Its subcellular location is the cytoplasm. The catalysed reaction is guanosine(527) in 16S rRNA + S-adenosyl-L-methionine = N(7)-methylguanosine(527) in 16S rRNA + S-adenosyl-L-homocysteine. Its function is as follows. Specifically methylates the N7 position of guanine in position 527 of 16S rRNA. In Shewanella frigidimarina (strain NCIMB 400), this protein is Ribosomal RNA small subunit methyltransferase G.